A 307-amino-acid polypeptide reads, in one-letter code: 4-hydroxy-3-methylbut-2-enyl diphosphate reductase (307 aa).

C13 is a binding site for [4Fe-4S] cluster. Residues H42 and H75 each coordinate (2E)-4-hydroxy-3-methylbut-2-enyl diphosphate. Positions 42 and 75 each coordinate dimethylallyl diphosphate. H42 and H75 together coordinate isopentenyl diphosphate. C97 lines the [4Fe-4S] cluster pocket. Residue H125 participates in (2E)-4-hydroxy-3-methylbut-2-enyl diphosphate binding. H125 is a dimethylallyl diphosphate binding site. H125 is a binding site for isopentenyl diphosphate. Catalysis depends on E127, which acts as the Proton donor. T165 serves as a coordination point for (2E)-4-hydroxy-3-methylbut-2-enyl diphosphate. Residue C195 participates in [4Fe-4S] cluster binding. (2E)-4-hydroxy-3-methylbut-2-enyl diphosphate contacts are provided by S223, S224, N225, and S267. Dimethylallyl diphosphate contacts are provided by S223, S224, N225, and S267. Positions 223, 224, 225, and 267 each coordinate isopentenyl diphosphate.

Belongs to the IspH family. [4Fe-4S] cluster serves as cofactor.

The catalysed reaction is isopentenyl diphosphate + 2 oxidized [2Fe-2S]-[ferredoxin] + H2O = (2E)-4-hydroxy-3-methylbut-2-enyl diphosphate + 2 reduced [2Fe-2S]-[ferredoxin] + 2 H(+). It catalyses the reaction dimethylallyl diphosphate + 2 oxidized [2Fe-2S]-[ferredoxin] + H2O = (2E)-4-hydroxy-3-methylbut-2-enyl diphosphate + 2 reduced [2Fe-2S]-[ferredoxin] + 2 H(+). It functions in the pathway isoprenoid biosynthesis; dimethylallyl diphosphate biosynthesis; dimethylallyl diphosphate from (2E)-4-hydroxy-3-methylbutenyl diphosphate: step 1/1. The protein operates within isoprenoid biosynthesis; isopentenyl diphosphate biosynthesis via DXP pathway; isopentenyl diphosphate from 1-deoxy-D-xylulose 5-phosphate: step 6/6. Its function is as follows. Catalyzes the conversion of 1-hydroxy-2-methyl-2-(E)-butenyl 4-diphosphate (HMBPP) into a mixture of isopentenyl diphosphate (IPP) and dimethylallyl diphosphate (DMAPP). Acts in the terminal step of the DOXP/MEP pathway for isoprenoid precursor biosynthesis. The protein is 4-hydroxy-3-methylbut-2-enyl diphosphate reductase of Chlamydia trachomatis serovar A (strain ATCC VR-571B / DSM 19440 / HAR-13).